The following is a 321-amino-acid chain: Lipoyl synthase (321 aa).

7 residues coordinate [4Fe-4S] cluster: Cys-68, Cys-73, Cys-79, Cys-94, Cys-98, Cys-101, and Ser-308. A Radical SAM core domain is found at 80 to 297; it reads FNHGTATFMI…KAEALAMGFT (218 aa).

It belongs to the radical SAM superfamily. Lipoyl synthase family. It depends on [4Fe-4S] cluster as a cofactor.

The protein resides in the cytoplasm. It catalyses the reaction [[Fe-S] cluster scaffold protein carrying a second [4Fe-4S](2+) cluster] + N(6)-octanoyl-L-lysyl-[protein] + 2 oxidized [2Fe-2S]-[ferredoxin] + 2 S-adenosyl-L-methionine + 4 H(+) = [[Fe-S] cluster scaffold protein] + N(6)-[(R)-dihydrolipoyl]-L-lysyl-[protein] + 4 Fe(3+) + 2 hydrogen sulfide + 2 5'-deoxyadenosine + 2 L-methionine + 2 reduced [2Fe-2S]-[ferredoxin]. It functions in the pathway protein modification; protein lipoylation via endogenous pathway; protein N(6)-(lipoyl)lysine from octanoyl-[acyl-carrier-protein]: step 2/2. In terms of biological role, catalyzes the radical-mediated insertion of two sulfur atoms into the C-6 and C-8 positions of the octanoyl moiety bound to the lipoyl domains of lipoate-dependent enzymes, thereby converting the octanoylated domains into lipoylated derivatives. The chain is Lipoyl synthase from Salmonella paratyphi A (strain AKU_12601).